The sequence spans 204 residues: LexA repressor (204 aa).

The H-T-H motif DNA-binding region spans 29–49 (VREICKGVGLSSTSSVHGHLS). Active-site for autocatalytic cleavage activity residues include S126 and K163.

Belongs to the peptidase S24 family. Homodimer.

The catalysed reaction is Hydrolysis of Ala-|-Gly bond in repressor LexA.. Functionally, represses a number of genes involved in the response to DNA damage (SOS response), including recA and lexA. In the presence of single-stranded DNA, RecA interacts with LexA causing an autocatalytic cleavage which disrupts the DNA-binding part of LexA, leading to derepression of the SOS regulon and eventually DNA repair. The sequence is that of LexA repressor from Clostridium novyi (strain NT).